We begin with the raw amino-acid sequence, 176 residues long: MTLILGIDPGSRITGYGVVRDTGRGCVYVASGCIRTGTGSGELHERLQIVYRGVREVIKTYGPVTMGIEKVFMARNADSALKLGQARGAAIVAGAEEALEIAEYTATQVKQAVAGTGGANKEQVMMMVMHLLKLTQKPQIDASDALAIALCHAHTRSSLIPHGLGTARSRGGRLRL.

Catalysis depends on residues Asp8, Glu69, and Asp141. Mg(2+) is bound by residues Asp8, Glu69, and Asp141.

Belongs to the RuvC family. Homodimer which binds Holliday junction (HJ) DNA. The HJ becomes 2-fold symmetrical on binding to RuvC with unstacked arms; it has a different conformation from HJ DNA in complex with RuvA. In the full resolvosome a probable DNA-RuvA(4)-RuvB(12)-RuvC(2) complex forms which resolves the HJ. Mg(2+) is required as a cofactor.

The protein localises to the cytoplasm. It catalyses the reaction Endonucleolytic cleavage at a junction such as a reciprocal single-stranded crossover between two homologous DNA duplexes (Holliday junction).. In terms of biological role, the RuvA-RuvB-RuvC complex processes Holliday junction (HJ) DNA during genetic recombination and DNA repair. Endonuclease that resolves HJ intermediates. Cleaves cruciform DNA by making single-stranded nicks across the HJ at symmetrical positions within the homologous arms, yielding a 5'-phosphate and a 3'-hydroxyl group; requires a central core of homology in the junction. The consensus cleavage sequence is 5'-(A/T)TT(C/G)-3'. Cleavage occurs on the 3'-side of the TT dinucleotide at the point of strand exchange. HJ branch migration catalyzed by RuvA-RuvB allows RuvC to scan DNA until it finds its consensus sequence, where it cleaves and resolves the cruciform DNA. This is Crossover junction endodeoxyribonuclease RuvC from Pseudomonas syringae pv. tomato (strain ATCC BAA-871 / DC3000).